Consider the following 74-residue polypeptide: Small ribosomal subunit protein uS15 (74 aa).

The protein belongs to the universal ribosomal protein uS15 family. As to quaternary structure, part of the 30S ribosomal subunit. Forms a bridge to the 50S subunit in the 70S ribosome, contacting the 23S rRNA.

In terms of biological role, one of the primary rRNA binding proteins, it binds directly to 16S rRNA where it helps nucleate assembly of the platform of the 30S subunit by binding and bridging several RNA helices of the 16S rRNA. Its function is as follows. Forms an intersubunit bridge (bridge B4) with the 23S rRNA of the 50S subunit in the ribosome. The chain is Small ribosomal subunit protein uS15 from Aster yellows witches'-broom phytoplasma (strain AYWB).